Consider the following 126-residue polypeptide: Large ribosomal subunit protein bL20c (126 aa).

It belongs to the bacterial ribosomal protein bL20 family.

It is found in the plastid. Its subcellular location is the chloroplast. Binds directly to 23S ribosomal RNA and is necessary for the in vitro assembly process of the 50S ribosomal subunit. It is not involved in the protein synthesizing functions of that subunit. In Pelargonium hortorum (Common geranium), this protein is Large ribosomal subunit protein bL20c.